The primary structure comprises 207 residues: Ankyrin repeat-containing protein P1E11.10 (207 aa).

2 ANK repeats span residues 36–65 and 69–98; these read NGYTPIHAAVSYGHSDLLKILVERGGDINI and DGETPLFVCEKLEIAHDLINQYNADTTVKN.

The protein resides in the cytoplasm. The protein localises to the nucleus. This is Ankyrin repeat-containing protein P1E11.10 from Schizosaccharomyces pombe (strain 972 / ATCC 24843) (Fission yeast).